Consider the following 264-residue polypeptide: Thymidylate synthase (264 aa).

Residue Arg-21 participates in dUMP binding. Residue His-51 coordinates (6R)-5,10-methylene-5,6,7,8-tetrahydrofolate. 126 to 127 provides a ligand contact to dUMP; the sequence is RR. The Nucleophile role is filled by Cys-146. Residues 166-169, Asn-177, and 207-209 contribute to the dUMP site; these read RSAD and HLY. (6R)-5,10-methylene-5,6,7,8-tetrahydrofolate is bound at residue Asp-169. Residue Ala-263 participates in (6R)-5,10-methylene-5,6,7,8-tetrahydrofolate binding.

The protein belongs to the thymidylate synthase family. Bacterial-type ThyA subfamily. In terms of assembly, homodimer.

It localises to the cytoplasm. The enzyme catalyses dUMP + (6R)-5,10-methylene-5,6,7,8-tetrahydrofolate = 7,8-dihydrofolate + dTMP. It functions in the pathway pyrimidine metabolism; dTTP biosynthesis. Functionally, catalyzes the reductive methylation of 2'-deoxyuridine-5'-monophosphate (dUMP) to 2'-deoxythymidine-5'-monophosphate (dTMP) while utilizing 5,10-methylenetetrahydrofolate (mTHF) as the methyl donor and reductant in the reaction, yielding dihydrofolate (DHF) as a by-product. This enzymatic reaction provides an intracellular de novo source of dTMP, an essential precursor for DNA biosynthesis. The sequence is that of Thymidylate synthase from Methylobacterium nodulans (strain LMG 21967 / CNCM I-2342 / ORS 2060).